Consider the following 165-residue polypeptide: MATPPSSEDSADEGPSNIGEAKFPILEPPLPATICGLAKLLEIPLDDCLIPCNFCGNFLTHLEVCEFDEKKLTLIWKDHLVFACCRVCCSATATYEFNQFYESTVLGRDIEQVTGKSVFDIHVRCYTCMKFLDSIEKLDICGRKRPFYLVRGSWKGICRLCKHFQ.

Zinc fingers lie at residues 52-88 (CNFC…CRVC) and 125-161 (CYTC…CRLC).

Belongs to the papillomaviridae E6 protein family. Forms homodimers. Interacts with ubiquitin-protein ligase UBE3A/E6-AP; this interaction stimulates UBE3A ubiquitin activity. Interacts with host BAK1.

It is found in the host cytoplasm. Its subcellular location is the host nucleus. Plays a major role in the induction and maintenance of cellular transformation. E6 associates with host UBE3A/E6-AP ubiquitin-protein ligase and modulates its activity. Protects host keratinocytes from apoptosis by mediating the degradation of host BAK1. May also inhibit host immune response. This is Protein E6 from Homo sapiens (Human).